A 431-amino-acid chain; its full sequence is MRTERSIELFARAREYIPGGVNSPVRAFKAVGNNPLFIKEGHGSKIYDVDGNEYIDYVCSWGPLILGHSHPQVVQAICEAAEKGSSFGAPCEQEIELAQLICEAIPSVEKVRMVNSGTEATMSAVRLARAFTGRNHIVKFEGCYHGHADHFLIQAGSGLLTAGVPTSPGVPEAFARHTLVARYNDLDSVERLFAQAPADIAAVIVEPVAGNMGLVLPEPGFLEGLRQITKRYGALLIFDEVISGFRFCFGGYQNIVNIEPDLTTLGKIIGGGLPVGAYGGKKEIMERIAPEGDVYQAGTLSGNPLAMAAGSATLKILRAGKCYELLESTAASLCGQLNQILAQHDGLLSMNRVASLFSLFFTGDKVRDYSSVMRSDTGKYASFHQQLLQGGVYFPPSQFEVCFISAAHDEGDVEKTLKTIDKALQQTMVEQ.

N6-(pyridoxal phosphate)lysine is present on Lys-267.

It belongs to the class-III pyridoxal-phosphate-dependent aminotransferase family. HemL subfamily. Homodimer. Requires pyridoxal 5'-phosphate as cofactor.

The protein localises to the cytoplasm. It carries out the reaction (S)-4-amino-5-oxopentanoate = 5-aminolevulinate. Its pathway is porphyrin-containing compound metabolism; protoporphyrin-IX biosynthesis; 5-aminolevulinate from L-glutamyl-tRNA(Glu): step 2/2. This chain is Glutamate-1-semialdehyde 2,1-aminomutase, found in Syntrophomonas wolfei subsp. wolfei (strain DSM 2245B / Goettingen).